A 342-amino-acid polypeptide reads, in one-letter code: Ribosomal RNA small subunit methyltransferase C (342 aa).

It belongs to the methyltransferase superfamily. RsmC family. In terms of assembly, monomer.

The protein resides in the cytoplasm. The catalysed reaction is guanosine(1207) in 16S rRNA + S-adenosyl-L-methionine = N(2)-methylguanosine(1207) in 16S rRNA + S-adenosyl-L-homocysteine + H(+). In terms of biological role, specifically methylates the guanine in position 1207 of 16S rRNA in the 30S particle. The protein is Ribosomal RNA small subunit methyltransferase C of Aeromonas hydrophila subsp. hydrophila (strain ATCC 7966 / DSM 30187 / BCRC 13018 / CCUG 14551 / JCM 1027 / KCTC 2358 / NCIMB 9240 / NCTC 8049).